The primary structure comprises 439 residues: Glycosyl hydrolase DigH (439 aa).

A signal peptide spans 1–27 (MDICSRNKKLTIRRPAILVALALLLCS). Residue C28 is the site of N-palmitoyl cysteine attachment. The S-diacylglycerol cysteine moiety is linked to residue C28. The tract at residues 34-54 (ESMVTPPAGSKPPATTQQSSQ) is disordered.

This sequence belongs to the glycosyl hydrolase-like 10 (GHL10) family.

The protein resides in the cell outer membrane. Its function is as follows. Divisome-localized glycosyl hydrolase that cleaves peptide-free (denuded) peptidoglycans. This chain is Glycosyl hydrolase DigH, found in Escherichia coli O157:H7.